The primary structure comprises 905 residues: Protein translocase subunit SecA (905 aa).

ATP contacts are provided by residues Gln87, 105–109, and Asp509; that span reads GEGKT. Zn(2+) is bound by residues Cys890, Cys892, Cys901, and His902.

This sequence belongs to the SecA family. As to quaternary structure, monomer and homodimer. Part of the essential Sec protein translocation apparatus which comprises SecA, SecYEG and auxiliary proteins SecDF-YajC and YidC. It depends on Zn(2+) as a cofactor.

It localises to the cell inner membrane. The protein resides in the cytoplasm. It carries out the reaction ATP + H2O + cellular proteinSide 1 = ADP + phosphate + cellular proteinSide 2.. Its function is as follows. Part of the Sec protein translocase complex. Interacts with the SecYEG preprotein conducting channel. Has a central role in coupling the hydrolysis of ATP to the transfer of proteins into and across the cell membrane, serving both as a receptor for the preprotein-SecB complex and as an ATP-driven molecular motor driving the stepwise translocation of polypeptide chains across the membrane. In Acinetobacter baylyi (strain ATCC 33305 / BD413 / ADP1), this protein is Protein translocase subunit SecA.